Here is a 176-residue protein sequence, read N- to C-terminus: Flavodoxin-like domain-containing protein BilS (176 aa).

It functions in the pathway porphyrin-containing compound metabolism; protoheme degradation. Its function is as follows. Together with BilR, catalyzes reduction of mesobilirubin and/or bilirubin to urobilinogen, a key step during heme degradation. BilS is probably involved in electron transfer for the bilirubin reductase BilR. The protein is Flavodoxin-like domain-containing protein BilS of Clostridioides difficile (strain CD3).